Consider the following 124-residue polypeptide: Ribonuclease pancreatic (124 aa).

Residues Lys7 and Arg10 each coordinate substrate. The active-site Proton acceptor is the His12. 4 cysteine pairs are disulfide-bonded: Cys26-Cys84, Cys40-Cys95, Cys58-Cys110, and Cys65-Cys72. N-linked (GlcNAc...) asparagine; partial glycosylation is present at Asn34. Residues 41–45 (KPVBT), Lys66, and Arg85 contribute to the substrate site. Residue His119 is the Proton donor of the active site.

The protein belongs to the pancreatic ribonuclease family. As to quaternary structure, monomer. Interacts with and forms tight 1:1 complexes with RNH1. Dimerization of two such complexes may occur. Interaction with RNH1 inhibits this protein. In terms of tissue distribution, pancreas.

Its subcellular location is the secreted. It catalyses the reaction an [RNA] containing cytidine + H2O = an [RNA]-3'-cytidine-3'-phosphate + a 5'-hydroxy-ribonucleotide-3'-[RNA].. The catalysed reaction is an [RNA] containing uridine + H2O = an [RNA]-3'-uridine-3'-phosphate + a 5'-hydroxy-ribonucleotide-3'-[RNA].. Functionally, endonuclease that catalyzes the cleavage of RNA on the 3' side of pyrimidine nucleotides. Acts on single-stranded and double-stranded RNA. This chain is Ribonuclease pancreatic (RNASE1), found in Damaliscus korrigum (Topi).